The primary structure comprises 416 residues: Transmembrane protease serine 11B-like protein (416 aa).

Topologically, residues 1 to 15 (MYRPVIASRKSIPPW) are cytoplasmic. Residues 16 to 36 (LIILCVLGVLAALGIIIGLLV) traverse the membrane as a helical; Signal-anchor for type II membrane protein segment. Over 37–416 (HFLAVENKIY…RNWIASKTGI (380 aa)) the chain is Extracellular. Positions 44 to 161 (KIYYYQGGFK…GSLKLTEISK (118 aa)) constitute an SEA domain. N-linked (GlcNAc...) asparagine glycosylation occurs at Asn107. One can recognise a Peptidase S1 domain in the interval 185-415 (ITGGSTAHKG…YRNWIASKTG (231 aa)). A disulfide bridge connects residues Cys210 and Cys226. The active-site Charge relay system is His225. N-linked (GlcNAc...) asparagine glycosylation is present at Asn235. The active-site Charge relay system is Asp270. Cystine bridges form between Cys335-Cys351 and Cys362-Cys391. The active-site Charge relay system is the Ser366.

It belongs to the peptidase S1 family. In terms of tissue distribution, expressed in esophagus, cervix, tongue, and testes.

It is found in the cell membrane. Its activity is regulated as follows. Inhibited by aprotinin, leupeptin, benzamidine, SERPINA1, SPINT1 and SPINT2. Serine protease. The polypeptide is Transmembrane protease serine 11B-like protein (Tmprss11b) (Mus musculus (Mouse)).